Reading from the N-terminus, the 394-residue chain is C-19 steroid 1alpha-hydroxylase (394 aa).

Positions 81, 85, 281, 335, 338, and 340 each coordinate heme b.

The protein belongs to the cytochrome P450 family. Heme b serves as cofactor.

It catalyses the reaction testosterone + 2 reduced [2Fe-2S]-[ferredoxin] + O2 + 2 H(+) = 1alpha-hydroxytestosterone + 2 oxidized [2Fe-2S]-[ferredoxin] + H2O. The enzyme catalyses androst-4-ene-3,17-dione + 2 reduced [2Fe-2S]-[ferredoxin] + O2 + 2 H(+) = 1alpha-hydroxyandrost-4-ene-3,17-dione + 2 oxidized [2Fe-2S]-[ferredoxin] + H2O. In terms of biological role, hydroxylase that can catalyze the in vitro conversion of the sesquiterpenoid nootkatone, a natural organic compound produced by some plants, to at least five hydrophilic products. The native ferredoxin reductase FdR_B and either Fdx2 or Fdx8 ferredoxins can act as the redox partners for the conversion of nootkatone. In addition, acts as a steroid 1alpha-hydroxylase, when associated in vitro with the surrogate redox partners bovine adrenodoxin (Adx) and adrenodoxin reductase (Adr). Acts on several C-19 steroid substrates, including testosterone and androstenedione, which are hydroxylated to 1alpha-hydroxytestosterone and 1alpha-hydroxyandrostenedione, respectively. Can use their derivatives testosterone-acetate and 11-oxoandrostenedione, but not vitamin D3 and 25-hydroxyvitamin D3. Also catalyzes the hydroxylation of the C-21 steroid 11-deoxycorticosterone to 1alpha-hydroxy-11-deoxycorticosterone. Catalyzes the hydroxylation of the C-21 steroid progesterone, leading to the formation of seven products: two major (1alpha-hydroxyprogesterone and 17alpha-hydroxyprogesterone) and five minor products. This chain is C-19 steroid 1alpha-hydroxylase, found in Sorangium cellulosum (strain So ce56) (Polyangium cellulosum (strain So ce56)).